The chain runs to 108 residues: Large ribosomal subunit protein uL24 (108 aa).

This sequence belongs to the universal ribosomal protein uL24 family. In terms of assembly, part of the 50S ribosomal subunit.

One of two assembly initiator proteins, it binds directly to the 5'-end of the 23S rRNA, where it nucleates assembly of the 50S subunit. Functionally, one of the proteins that surrounds the polypeptide exit tunnel on the outside of the subunit. The polypeptide is Large ribosomal subunit protein uL24 (Salinispora tropica (strain ATCC BAA-916 / DSM 44818 / JCM 13857 / NBRC 105044 / CNB-440)).